Reading from the N-terminus, the 125-residue chain is UPF0231 protein HD_1708 (125 aa).

It belongs to the UPF0231 family.

The polypeptide is UPF0231 protein HD_1708 (Haemophilus ducreyi (strain 35000HP / ATCC 700724)).